The sequence spans 401 residues: NADH-quinone oxidoreductase subunit D (401 aa).

This sequence belongs to the complex I 49 kDa subunit family. In terms of assembly, NDH-1 is composed of 14 different subunits. Subunits NuoB, C, D, E, F, and G constitute the peripheral sector of the complex.

The protein resides in the cell inner membrane. The catalysed reaction is a quinone + NADH + 5 H(+)(in) = a quinol + NAD(+) + 4 H(+)(out). Its function is as follows. NDH-1 shuttles electrons from NADH, via FMN and iron-sulfur (Fe-S) centers, to quinones in the respiratory chain. The immediate electron acceptor for the enzyme in this species is believed to be ubiquinone. Couples the redox reaction to proton translocation (for every two electrons transferred, four hydrogen ions are translocated across the cytoplasmic membrane), and thus conserves the redox energy in a proton gradient. In Rhodopseudomonas palustris (strain HaA2), this protein is NADH-quinone oxidoreductase subunit D.